The sequence spans 260 residues: Phosphate import ATP-binding protein PstB 1 (260 aa).

Positions 13–255 constitute an ABC transporter domain; that stretch reads ISARDLNVHY…PQHPLTQGYI (243 aa). An ATP-binding site is contributed by 45–52; that stretch reads GPSGCGKS.

Belongs to the ABC transporter superfamily. Phosphate importer (TC 3.A.1.7) family. In terms of assembly, the complex is composed of two ATP-binding proteins (PstB), two transmembrane proteins (PstC and PstA) and a solute-binding protein (PstS).

Its subcellular location is the cell inner membrane. The catalysed reaction is phosphate(out) + ATP + H2O = ADP + 2 phosphate(in) + H(+). Its function is as follows. Part of the ABC transporter complex PstSACB involved in phosphate import. Responsible for energy coupling to the transport system. The sequence is that of Phosphate import ATP-binding protein PstB 1 from Paramagnetospirillum magneticum (strain ATCC 700264 / AMB-1) (Magnetospirillum magneticum).